Reading from the N-terminus, the 444-residue chain is MSANHMTPGEIVSELDKFIIGQNRAKRAVAVALRNRWRRQQVAEPLRHEIHPKNILMIGPTGVGKTEIARRLAKLANAPFIKIEATKFTEVGYVGRDVDTIIRDLTEYSIKQTRELEMRRVRSHAEDAAEDRILDALVPPPRGASGEPERGEDNSARQTFRKRLREGKIDDLEIEIEIAQPMPQMDVMTPPGMEEMAEQLRGMFAGLARDKKKSKKIKVREAFKLIVEEEAAKRVNEDDLRAAAITNVEQNGIVFLDEIDKIAARQETGGADVSRQGVQRDLLPLVEGTTVNTRYGMVRTDHILFIASGAFHLARPSDLIPELQGRFPIRVELDSLSAEDFVSILSETDASLIKQYTALLGTEDVKLEFTDDGIRRLAELAFSVNERTENIGARRLYTVMEKLLEELSFDASANSGEVITIDAAYVDLQLAETAGSQDLARYVL.

Residues Ile-20 and 62–67 (GVGKTE) contribute to the ATP site. The interval 130 to 158 (EDRILDALVPPPRGASGEPERGEDNSARQ) is disordered. ATP is bound by residues Asp-257, Glu-322, and Arg-394.

The protein belongs to the ClpX chaperone family. HslU subfamily. A double ring-shaped homohexamer of HslV is capped on each side by a ring-shaped HslU homohexamer. The assembly of the HslU/HslV complex is dependent on binding of ATP.

Its subcellular location is the cytoplasm. Functionally, ATPase subunit of a proteasome-like degradation complex; this subunit has chaperone activity. The binding of ATP and its subsequent hydrolysis by HslU are essential for unfolding of protein substrates subsequently hydrolyzed by HslV. HslU recognizes the N-terminal part of its protein substrates and unfolds these before they are guided to HslV for hydrolysis. This is ATP-dependent protease ATPase subunit HslU from Bordetella pertussis (strain Tohama I / ATCC BAA-589 / NCTC 13251).